The primary structure comprises 267 residues: Glutamate 5-kinase (267 aa).

Lys-15 serves as a coordination point for ATP. Residues Ser-55, Asp-142, and Asn-158 each contribute to the substrate site. Residues 178-179 (SD) and 220-226 (TGGMATK) contribute to the ATP site.

It belongs to the glutamate 5-kinase family.

The protein localises to the cytoplasm. The enzyme catalyses L-glutamate + ATP = L-glutamyl 5-phosphate + ADP. It participates in amino-acid biosynthesis; L-proline biosynthesis; L-glutamate 5-semialdehyde from L-glutamate: step 1/2. Catalyzes the transfer of a phosphate group to glutamate to form L-glutamate 5-phosphate. In Ligilactobacillus salivarius (strain UCC118) (Lactobacillus salivarius), this protein is Glutamate 5-kinase.